Here is a 1048-residue protein sequence, read N- to C-terminus: Putative cation efflux system protein SilA (1048 aa).

A run of 14 helical transmembrane segments spans residues 14–34 (FLVM…IINT), 125–145 (VSSE…YALV), 338–358 (LSSK…LFLW), 363–383 (ALVA…VMHF), 391–411 (MSLG…IVMI), 446–466 (VGPA…PIFT), 485–505 (SMAG…GFWI), 539–559 (TLLV…QVGG), 737–757 (GMTV…AMVG), 871–891 (KLKL…YLAF), 897–917 (ALLI…FLYW), 928–948 (TGFI…LMYL), 985–1005 (AMTV…TGAG), and 1012–1032 (IAAP…FIIP).

It belongs to the resistance-nodulation-cell division (RND) (TC 2.A.6) family.

It is found in the cell inner membrane. Functionally, component of the sil cation-efflux system that confers resistance to silver. May be part of a three-component cation/proton antiporter. This is Putative cation efflux system protein SilA (silA) from Salmonella typhimurium.